The primary structure comprises 360 residues: MNTFGHFLRVTTWGESHGRAVGCVIDGFPAGLEVDEEFIQREMERRRPGKKYTTQRKEVDRVEILSGVFEGLTTATPISMVVWNVDADSSAYESLKTVFRPGHADYTYWAKFGVRDWRGGGRASARETAARVAAGAMAKLLLRRYDVKVMGYAKEIAGVSCEVDDAEKAFERAERSPLRMPDERAEKEAEQRLKEAMSEGDSVGGVVEVVAKNVPAGLGEPVFGKLDAYLAYAVMGIPAVKGVEIGAGFEAARKRGSENNDPIVLKDGRIRFATNNAGGILGGISNGEDIVLRAAIKPTPSISKKQRTVDYEKMEEAEISVKGRHDPCIVPRAVPVVEAMVALVLADCMLMQGLIPRSLL.

Residue Arg46 participates in NADP(+) binding. Residues Arg122–Ser124, Gly282, Lys297–Ser301, and Arg324 contribute to the FMN site.

Belongs to the chorismate synthase family. Requires FMNH2 as cofactor.

The catalysed reaction is 5-O-(1-carboxyvinyl)-3-phosphoshikimate = chorismate + phosphate. Its pathway is metabolic intermediate biosynthesis; chorismate biosynthesis; chorismate from D-erythrose 4-phosphate and phosphoenolpyruvate: step 7/7. Its function is as follows. Catalyzes the anti-1,4-elimination of the C-3 phosphate and the C-6 proR hydrogen from 5-enolpyruvylshikimate-3-phosphate (EPSP) to yield chorismate, which is the branch point compound that serves as the starting substrate for the three terminal pathways of aromatic amino acid biosynthesis. This reaction introduces a second double bond into the aromatic ring system. This Archaeoglobus fulgidus (strain ATCC 49558 / DSM 4304 / JCM 9628 / NBRC 100126 / VC-16) protein is Chorismate synthase.